A 185-amino-acid polypeptide reads, in one-letter code: Ribosome-recycling factor (185 aa).

Positions 136 to 155 (NDDLKKLEKNGDITEDELRA) are disordered.

This sequence belongs to the RRF family.

The protein resides in the cytoplasm. Functionally, responsible for the release of ribosomes from messenger RNA at the termination of protein biosynthesis. May increase the efficiency of translation by recycling ribosomes from one round of translation to another. This Bacillus velezensis (strain DSM 23117 / BGSC 10A6 / LMG 26770 / FZB42) (Bacillus amyloliquefaciens subsp. plantarum) protein is Ribosome-recycling factor.